Here is a 200-residue protein sequence, read N- to C-terminus: MSYYDPQGVIPYVIEQSPRGERAMDIYSRLLKDRIIFLGTPVDDQVANAIMAQLLHLESEDPEQDINLYINSPGGSVSAGLAIYDTMQFVKPDIVTTALGMAASMGAFLLAAGTKGKRFALPNTRILLHQPAVGGLAGQASDVEIHARELIRTKRRLNEILSEHTGQPYDKIERDTDRDFIMGAEEAIEYGLIDDIVRHH.

Catalysis depends on Ser-104, which acts as the Nucleophile. His-129 is an active-site residue.

It belongs to the peptidase S14 family. In terms of assembly, fourteen ClpP subunits assemble into 2 heptameric rings which stack back to back to give a disk-like structure with a central cavity, resembling the structure of eukaryotic proteasomes.

The protein localises to the cytoplasm. The catalysed reaction is Hydrolysis of proteins to small peptides in the presence of ATP and magnesium. alpha-casein is the usual test substrate. In the absence of ATP, only oligopeptides shorter than five residues are hydrolyzed (such as succinyl-Leu-Tyr-|-NHMec, and Leu-Tyr-Leu-|-Tyr-Trp, in which cleavage of the -Tyr-|-Leu- and -Tyr-|-Trp bonds also occurs).. Functionally, cleaves peptides in various proteins in a process that requires ATP hydrolysis. Has a chymotrypsin-like activity. Plays a major role in the degradation of misfolded proteins. The protein is ATP-dependent Clp protease proteolytic subunit of Rubrobacter xylanophilus (strain DSM 9941 / JCM 11954 / NBRC 16129 / PRD-1).